Here is a 172-residue protein sequence, read N- to C-terminus: Small ribosomal subunit protein uS5 (172 aa).

The region spanning 16-79 is the S5 DRBM domain; that stretch reads LKEKLVHINR…EDGKKNVIKV (64 aa).

The protein belongs to the universal ribosomal protein uS5 family. Part of the 30S ribosomal subunit. Contacts proteins S4 and S8.

With S4 and S12 plays an important role in translational accuracy. In terms of biological role, located at the back of the 30S subunit body where it stabilizes the conformation of the head with respect to the body. The protein is Small ribosomal subunit protein uS5 of Pelodictyon phaeoclathratiforme (strain DSM 5477 / BU-1).